Consider the following 318-residue polypeptide: Ribose-phosphate pyrophosphokinase 2 (318 aa).

The Mg(2+) site is built by Asp132, His134, His143, and Asp147.

The protein belongs to the ribose-phosphate pyrophosphokinase family.

The protein localises to the cytoplasm. It carries out the reaction D-ribose 5-phosphate + ATP = 5-phospho-alpha-D-ribose 1-diphosphate + AMP + H(+). Its pathway is metabolic intermediate biosynthesis; 5-phospho-alpha-D-ribose 1-diphosphate biosynthesis; 5-phospho-alpha-D-ribose 1-diphosphate from D-ribose 5-phosphate (route I): step 1/1. Its function is as follows. 5-phosphoribose 1-diphosphate synthase involved in nucleotide, histidine, and tryptophan biosynthesis. Active in heteromultimeric complexes with other 5-phosphoribose 1-diphosphate synthases (PRS2, PRS3, PRS4 and PRS5). This is Ribose-phosphate pyrophosphokinase 2 (PRS2) from Saccharomyces cerevisiae (strain ATCC 204508 / S288c) (Baker's yeast).